The sequence spans 283 residues: Protein/nucleic acid deglycase HchA (283 aa).

Zn(2+) contacts are provided by His-86, Glu-91, and His-123. Catalysis depends on Cys-185, which acts as the Nucleophile.

It belongs to the peptidase C56 family. HchA subfamily. Homodimer.

It localises to the cytoplasm. It carries out the reaction N(omega)-(1-hydroxy-2-oxopropyl)-L-arginyl-[protein] + H2O = lactate + L-arginyl-[protein] + H(+). The enzyme catalyses N(6)-(1-hydroxy-2-oxopropyl)-L-lysyl-[protein] + H2O = lactate + L-lysyl-[protein] + H(+). The catalysed reaction is S-(1-hydroxy-2-oxopropyl)-L-cysteinyl-[protein] + H2O = lactate + L-cysteinyl-[protein] + H(+). It catalyses the reaction N(omega)-(1-hydroxy-2-oxoethyl)-L-arginyl-[protein] + H2O = L-arginyl-[protein] + glycolate + H(+). It carries out the reaction N(6)-(1-hydroxy-2-oxoethyl)-L-lysyl-[protein] + H2O = glycolate + L-lysyl-[protein] + H(+). The enzyme catalyses S-(1-hydroxy-2-oxoethyl)-L-cysteinyl-[protein] + H2O = glycolate + L-cysteinyl-[protein] + H(+). The catalysed reaction is N(2)-(1-hydroxy-2-oxopropyl)-dGTP + H2O = lactate + dGTP + H(+). It catalyses the reaction N(2)-(1-hydroxy-2-oxopropyl)-GTP + H2O = lactate + GTP + H(+). It carries out the reaction N(2)-(1-hydroxy-2-oxopropyl)-GDP + H2O = lactate + GDP + H(+). The enzyme catalyses N(2)-(1-hydroxy-2-oxopropyl)-GMP + H2O = lactate + GMP + H(+). The catalysed reaction is N(2)-(1-hydroxy-2-oxoethyl)-dGTP + H2O = dGTP + glycolate + H(+). It catalyses the reaction N(2)-(1-hydroxy-2-oxoethyl)-GTP + H2O = glycolate + GTP + H(+). It carries out the reaction N(2)-(1-hydroxy-2-oxoethyl)-GDP + H2O = glycolate + GDP + H(+). The enzyme catalyses N(2)-(1-hydroxy-2-oxoethyl)-GMP + H2O = glycolate + GMP + H(+). The catalysed reaction is an N(2)-(1-hydroxy-2-oxopropyl)-guanosine in RNA + H2O = a guanosine in RNA + lactate + H(+). It catalyses the reaction an N(2)-(1-hydroxy-2-oxopropyl)-2'-deoxyguanosine in DNA + H2O = a 2'-deoxyguanosine in DNA + lactate + H(+). It carries out the reaction an N(2)-(1-hydroxy-2-oxoethyl)-guanosine in RNA + H2O = a guanosine in RNA + glycolate + H(+). The enzyme catalyses an N(2)-(1-hydroxy-2-oxoethyl)-2'-deoxyguanosine in DNA + H2O = a 2'-deoxyguanosine in DNA + glycolate + H(+). In terms of biological role, protein and nucleotide deglycase that catalyzes the deglycation of the Maillard adducts formed between amino groups of proteins or nucleotides and reactive carbonyl groups of glyoxals. Thus, functions as a protein deglycase that repairs methylglyoxal- and glyoxal-glycated proteins, and releases repaired proteins and lactate or glycolate, respectively. Deglycates cysteine, arginine and lysine residues in proteins, and thus reactivates these proteins by reversing glycation by glyoxals. Acts on early glycation intermediates (hemithioacetals and aminocarbinols), preventing the formation of Schiff bases and advanced glycation endproducts (AGE). Also functions as a nucleotide deglycase able to repair glycated guanine in the free nucleotide pool (GTP, GDP, GMP, dGTP) and in DNA and RNA. Is thus involved in a major nucleotide repair system named guanine glycation repair (GG repair), dedicated to reversing methylglyoxal and glyoxal damage via nucleotide sanitization and direct nucleic acid repair. Plays an important role in protecting cells from carbonyl stress. This is Protein/nucleic acid deglycase HchA from Escherichia coli O45:K1 (strain S88 / ExPEC).